The sequence spans 784 residues: Endonuclease MutS2 (784 aa).

335–342 lines the ATP pocket; the sequence is GPNTGGKT. Residues 709–784 form the Smr domain; it reads LDLRGERYED…GTGVTIVELK (76 aa).

Belongs to the DNA mismatch repair MutS family. MutS2 subfamily. As to quaternary structure, homodimer. Binds to stalled ribosomes, contacting rRNA.

Its function is as follows. Endonuclease that is involved in the suppression of homologous recombination and thus may have a key role in the control of bacterial genetic diversity. In terms of biological role, acts as a ribosome collision sensor, splitting the ribosome into its 2 subunits. Detects stalled/collided 70S ribosomes which it binds and splits by an ATP-hydrolysis driven conformational change. Acts upstream of the ribosome quality control system (RQC), a ribosome-associated complex that mediates the extraction of incompletely synthesized nascent chains from stalled ribosomes and their subsequent degradation. Probably generates substrates for RQC. The polypeptide is Endonuclease MutS2 (Geobacillus sp. (strain WCH70)).